The primary structure comprises 618 residues: MPKYRSSTTTQGRNMAGARALWRATGMNSGDFNKIIVAVVNSFTQFVPGHVHLRNVGKLVSEEIYINGGVAKEFNTIAIDDGIAMGHSGMLYSLPSRDLIADSVEYVINAHCVDAMVCISNCDKITPGMLMAALRLNIPTVFVSGGPMESGSVTLSRYNNSSDVKLSLVDAITASANPNITDIDKEQIELEACPTCGSCSGMFTANSMNCLMEVLGLAQPGNGSLLATHFDRKEMFLNAGRYIMNLSRLYYEKDNSIVLPRNIANKMAFENAAMLDIAMGGSTNTVLHLLAAAQEGEISFTMKDIDRLSRKVPHLCKIAPNSDRYYMEDFHRAGGVMGILGELQRCGLLYENTYNILNKSLLDTLRQYDIKLCQDLEIKRMYAAAPAGVRTIKPFSQNNRWNSLDIDRFAGCIRSQEYAYSQDGGLAVLYGNLAPKGCLVKTAGVISELKSFRGPAKVYESQEESVQAILTGQVCSGDVVVIRYEGPKGGPGMQEMLYPTSFLRSMGLDLHCALITDGRFSGGTSGLSVGHISPEAASAGLIGLVCDGDMININISKRSIVLEVSDYVLKNRYEIEISRGTKAWTPSCRNRDVSFSLKAYAKLVTSADTGAVRDRSQL.

Mg(2+) is bound at residue Asp-81. Cys-122 is a binding site for [2Fe-2S] cluster. Residues Asp-123 and Lys-124 each contribute to the Mg(2+) site. At Lys-124 the chain carries N6-carboxylysine. Cys-199 is a [2Fe-2S] cluster binding site. Glu-495 is a binding site for Mg(2+). Ser-521 functions as the Proton acceptor in the catalytic mechanism.

It belongs to the IlvD/Edd family. In terms of assembly, homodimer. [2Fe-2S] cluster is required as a cofactor. Requires Mg(2+) as cofactor.

It catalyses the reaction (2R)-2,3-dihydroxy-3-methylbutanoate = 3-methyl-2-oxobutanoate + H2O. The catalysed reaction is (2R,3R)-2,3-dihydroxy-3-methylpentanoate = (S)-3-methyl-2-oxopentanoate + H2O. The protein operates within amino-acid biosynthesis; L-isoleucine biosynthesis; L-isoleucine from 2-oxobutanoate: step 3/4. It participates in amino-acid biosynthesis; L-valine biosynthesis; L-valine from pyruvate: step 3/4. In terms of biological role, functions in the biosynthesis of branched-chain amino acids. Catalyzes the dehydration of (2R,3R)-2,3-dihydroxy-3-methylpentanoate (2,3-dihydroxy-3-methylvalerate) into 2-oxo-3-methylpentanoate (2-oxo-3-methylvalerate) and of (2R)-2,3-dihydroxy-3-methylbutanoate (2,3-dihydroxyisovalerate) into 2-oxo-3-methylbutanoate (2-oxoisovalerate), the penultimate precursor to L-isoleucine and L-valine, respectively. The sequence is that of Dihydroxy-acid dehydratase from Blochmanniella floridana.